The chain runs to 327 residues: o-succinylbenzoate synthase (327 aa).

Catalysis depends on lysine 110, which acts as the Proton donor. Mg(2+)-binding residues include aspartate 138, glutamate 165, and aspartate 188. Lysine 212 acts as the Proton acceptor in catalysis.

Belongs to the mandelate racemase/muconate lactonizing enzyme family. MenC type 1 subfamily. It depends on a divalent metal cation as a cofactor.

It carries out the reaction (1R,6R)-6-hydroxy-2-succinyl-cyclohexa-2,4-diene-1-carboxylate = 2-succinylbenzoate + H2O. Its pathway is quinol/quinone metabolism; 1,4-dihydroxy-2-naphthoate biosynthesis; 1,4-dihydroxy-2-naphthoate from chorismate: step 4/7. The protein operates within quinol/quinone metabolism; menaquinone biosynthesis. In terms of biological role, converts 2-succinyl-6-hydroxy-2,4-cyclohexadiene-1-carboxylate (SHCHC) to 2-succinylbenzoate (OSB). The sequence is that of o-succinylbenzoate synthase from Mycobacterium marinum (strain ATCC BAA-535 / M).